The chain runs to 155 residues: MSRRGTAEEKTAKSDPIYRNRLVNMLVNRILKHGKKSLAYQIIYRSVKKIQQKTETNPLSVLRQAIRGVTPDIAVKARRVGGSTHQVPIEIGSTQGKALAIRWLLGASRKRPGRNMAFKLSSELVDAAKGSGDAIRKKEETHRMAEANRAFAHFR.

This sequence belongs to the universal ribosomal protein uS7 family. As to quaternary structure, part of the 30S ribosomal subunit.

It localises to the plastid. The protein resides in the chloroplast. Functionally, one of the primary rRNA binding proteins, it binds directly to 16S rRNA where it nucleates assembly of the head domain of the 30S subunit. The chain is Small ribosomal subunit protein uS7cz/uS7cy (rps7-A) from Vitis vinifera (Grape).